The sequence spans 139 residues: Large ribosomal subunit protein bL17 (139 aa).

The protein belongs to the bacterial ribosomal protein bL17 family. Part of the 50S ribosomal subunit. Contacts protein L32.

The sequence is that of Large ribosomal subunit protein bL17 from Cereibacter sphaeroides (strain ATCC 17029 / ATH 2.4.9) (Rhodobacter sphaeroides).